A 181-amino-acid chain; its full sequence is ADP-ribosylation factor 1 (181 aa).

G2 carries N-myristoyl glycine lipidation. GTP-binding positions include 25–32, T48, G70, 126–129, and 160–161; these read LDGAGKTT, NKQD, and AT. Residue K127 forms a Glycyl lysine isopeptide (Lys-Gly) (interchain with G-Cter in ubiquitin) linkage.

It belongs to the small GTPase superfamily. Arf family. As to quaternary structure, interacts with RUD3. Interacts with VPS13 (via C-terminal part); the interaction is direct.

Its subcellular location is the golgi apparatus. It catalyses the reaction GTP + H2O = GDP + phosphate + H(+). Its function is as follows. GTP-binding protein involved in Golgi vesicle trafficking. May modulate vesicle budding and uncoating within the Golgi apparatus. May recruit the lipid transfer protein VPS13 to Golgi membranes. Recruits polyadenylate-binding protein PAB1 to COPI vesicles, and this is required for correct localization of the asymmetrically distributed ASH1 mRNA. The protein is ADP-ribosylation factor 1 (ARF1) of Saccharomyces cerevisiae (strain ATCC 204508 / S288c) (Baker's yeast).